Consider the following 1035-residue polypeptide: NACHT, LRR and PYD domains-containing protein 3 (1035 aa).

One can recognise a Pyrin domain in the interval 1 to 93 (MKMMSVRCKL…WEKAKKDQPE (93 aa)). Serine 5 carries the phosphoserine modification. A disulfide bridge connects residues cysteine 8 and cysteine 106. A Phosphotyrosine modification is found at tyrosine 13. A lipid anchor (S-palmitoyl cysteine) is attached at cysteine 128. The required for binding to phosphatidylinositol 4-phosphate (PtdIns4P) stretch occupies residues 129 to 132 (KKKK). Phosphotyrosine occurs at positions 134 and 138. An FISNA domain is found at 138–208 (YRRHVRSRFY…SSLKLELLFE (71 aa)). Serine 159 is modified (phosphoserine). At tyrosine 166 the chain carries Phosphotyrosine. Threonine 167 contributes to the ATP binding site. Serine 199 carries the phosphoserine modification. Residues 218–534 (HTVVFQGAAG…EFFAAMYYLL (317 aa)) enclose the NACHT domain. 224 to 231 (GAAGIGKT) contacts ATP. Phosphoserine occurs at positions 263 and 293. A Glycyl lysine isopeptide (Lys-Gly) (interchain with G-Cter in ubiquitin) cross-link involves residue lysine 322. Residue serine 332 is modified to Phosphoserine. The KFERQ-like motif 1 signature appears at 353–357 (LEKLQ). A Glycyl lysine isopeptide (Lys-Gly) (interchain with G-Cter in ubiquitin) cross-link involves residue lysine 428. Histidine 520 serves as a coordination point for ATP. Positions 603–607 (QVRLE) match the KFERQ-like motif 2 motif. Lysine 689 is covalently cross-linked (Glycyl lysine isopeptide (Lys-Gly) (interchain with G-Cter in ubiquitin)). A phosphoserine mark is found at serine 727 and serine 734. LRR repeat units follow at residues 741–761 (SLTE…RVLC), 770–791 (NIQR…NISS), 798–818 (KLVE…RLLC), 827–848 (NLQK…DLAL), and 855–875 (SLTR…QVLC). Positions 797–801 (QKLVE) match the KFERQ-like motif 3 motif. Serine 805 is subject to Phosphoserine. S-palmitoyl cysteine attachment occurs at residues cysteine 836, cysteine 837, and cysteine 843. Tyrosine 860 carries the post-translational modification Phosphotyrosine. Lysine 877 participates in a covalent cross-link: Glycyl lysine isopeptide (Lys-Gly) (interchain with G-Cter in ubiquitin). 4 LRR repeats span residues 884 to 905 (NLQK…ALTS), 912 to 932 (NLTH…KLLC), 941 to 962 (KLQM…DLST), and 969 to 990 (SLRK…TLCE). The S-palmitoyl cysteine moiety is linked to residue cysteine 957. Lysine 972 is covalently cross-linked (Glycyl lysine isopeptide (Lys-Gly) (interchain with G-Cter in ubiquitin)). Positions 990–994 (EVLKQ) match the KFERQ-like motif 4 motif. Phosphoserine is present on serine 1034.

Belongs to the NLRP family. As to quaternary structure, sensor component of NLRP3 inflammasomes; inflammasomes are supramolecular complexes that assemble in the cytosol in response to pathogens and other damage-associated signals and play critical roles in innate immunity and inflammation. The core of NLRP3 inflammasomes consists of a signal sensor component (NLRP3), an adapter (PYCARD/ASC), which recruits an effector pro-inflammatory caspase (CASP1 and, possibly, CASP4 and CASP5). Homodecamer; inactive NLRP3 forms homodecameric double-ring cages that hide pyrin domains within NACHT-LRR rings to avoid premature activation. Interacts (via pyrin domain) with PYCARD/ASC (via pyrin domain); interaction is direct. Interacts (via LRR repeat domain) with NEK7 (via N-terminus); the interaction is required for the formation of the complex NLRP3:PYCARD, oligomerization of PYCARD/ASC and activation of CASP1. Interacts (via LRR repeat domain) with NR4A1/Nur77 (via N-terminus); the interaction is direct, requires activation of NR4A1 by its ligands NBRE-containing dsDNA and lipopolysaccharide, and stimulates the association of NLRP3 with NEK7 for non-canonical NLRP3 inflammasome activation. Interacts with CARD8; leading to inhibit formation of the NLRP3 inflammasome. Interacts with MEFV; this interaction targets NLRP3 to degradation by autophagy, hence preventing excessive IL1B- and IL18-mediated inflammation. Interacts with EIF2AK2/PKR; this interaction requires EIF2AK2 activity, is accompanied by EIF2AK2 autophosphorylation and promotes inflammasome assembly in response to specific stimuli. Interacts with GBP5 (via DAPIN domain); this interaction promotes inflammasome assembly in response to microbial and soluble, but not crystalline, agents. Interacts with PML (isoform PML-1) (via the leucine-rich repeat (LRR) domain); PML-mediated increase in NLRP3 inflammasome activation does not depend upon this interaction. Interacts (via NACHT domain) with DHX33 (via DEAH box); NLRP3 activation in presence of cytosolic dsRNA is mediated by DHX33. Interacts (via NACHT and LRR domains) with ARRB2; this interaction is direct and inducible by polyunsaturated fatty acids (PUFAs). Interacts (via NACHT domain) with DDX3X under both LPS-primed and inflammasome-activating conditions. Interacts with IRF4 (via the LRR domain); this interaction is direct and is required for optimal IRF4 binding to IL4 promoter and efficient IL4 transactivation during differentiation of Th2 helper T-cells. Interacts with MAVS; promoting localization to mitochondria and activation of the NLRP3 inflammasome. Interacts with MARK4; promoting localization of NLRP3 to the microtubule organizing center (MTOC). Interacts with TRIM50; this interaction also promotes NLRP3 oligomerization and subsequent inflammasome activation. Interacts with IRGM; preventing NLRP3 inflammasome assembly and promoting NLRP3 degradation. Interacts (via NACHT and LLR domains) with ABHD8; this interaction is enhanced in the presence of NLRP3 inflammasome inducers, such as ATP, nigericin, silica, or alum. Interaction with ABHD8 leads the recruitment of ZDHHC12, hence facilitating NLRP3 palmitoylation and degradation by the chaperone-mediated autophagy pathway (CMA), therefore attenuating NLRP3 inflammasome activation. In terms of processing, phosphorylation by MAPK8/JNK1 increases inflammasome activation by promoting deubiquitination by BRCC3 and NLRP3 homooligomerization. Phosphorylation at Ser-805 by CSNK1A1 prevents inflammasome activation by preventing NEK7 recruitment. Phosphorylation at Ser-5 in the pyrin domain inhibits homomultimerization of NLRP3 and activation of the NLRP3 inflammasome: dephosphorylation by protein phosphatase 2A (PP2A) promotes assembly of the NLRP3 inflammasome. Phosphorylation at Ser-293 by PKD/PRKD1 promotes NLRP3 inflammasome assembly. Phosphorylation by ERK1/MAPK3 promotes NLRP3 inflammasome assembly. Phosphorylation by BTK (at Tyr-134, Tyr-138 and Tyr-166) in the region that mediates binding to phosphatidylinositol phosphate, promotes relocalization of NLRP3 and assembly of the NLRP3 inflammasome. Phosphorylation at Tyr-860 inhibits NLRP3 inflammasome assembly: dephosphorylation by PTPN22 promotes inflammasome activation. Phosphorylated by LATS1 and LATS2 at Ser-263 following palmitoylation by ZDHHC1, promoting its relocalization to the microtubule organizing center (MTOC), where NLRP3 is activated by NEK7, leading to inflammasome assembly and activation. Ubiquitinated; undergoes both 'Lys-48'- and 'Lys-63'-linked polyubiquitination. Ubiquitination does not lead to degradation, but inhibits inflammasome activation. Deubiquitination is catalyzed by BRCC3 and associated with NLRP3 activation and inflammasome assembly. This process can be induced by the activation of Toll-like receptors (by LPS), through a non-transcriptional pathway dependent on the mitochondrial production of reactive oxygen species, and by ATP. Ubiquitinated by TRIM31 via 'Lys-48'-linked ubiquitination, leading to its degradation by the proteasome. Ubiquitinated at Lys-689 by the SCF(FBXL2) complex, leading to its degradation by the proteasome. Ubiquitinated by TRIM35 via 'lys-48' and 'Lys-63'-linked ubiquitination leading to inhibition of NLRP3 inflammasome activation. Undergoes 'Lys-27'-linked polyubiquitination by MARCHF5, leading to NLRP3-NEK7 complex formation and NLRP3 oligomerization. Post-translationally, the disulfide bond in the pyrin domain might play a role in reactive oxygen species-mediated activation. In terms of processing, palmitoylation by ZDHHC12 promotes NLRP3 degradation by the chaperone-mediated autophagy pathway (CMA) and therefore limits NLRP3 inflammasome activation. Interaction with ZDHHC12, and hence NLRP3 palmitoylation, is greatly enhanced by ABHD8. Following palmitoylation, HSPA8/HSC70 recognizes and binds the KFERQ-like motifs on NLRP3 and promotes NLRP3 recruitment to lysosomes, where it is degraded via the chaperone-mediated autophagy pathway in a LAMP2-dependent process. Palmitoylation at Cys-836 and Cys-837 by ZDHHC5 enhances its binding to NEK7 leading to inflammasome assembly and activation. Palmitoylation at Cys-128 and Cys-957 by ZDHHC1 facilitates phosphorylation at Ser-263 by LATS1 and LATS2, promoting its relocalization to the microtubule organizing center (MTOC), where NLRP3 is activated by NEK7, leading to inflammasome assembly and activation. Depalmitoylated by ABHD17A. Degraded via selective autophagy following interaction with IRGM. IRGM promotes NLRP3 recruitment to autophagosome membranes, promoting its SQSTM1/p62-dependent autophagy-dependent degradation.

Its subcellular location is the cytoplasm. The protein resides in the cytosol. The protein localises to the inflammasome. It is found in the cytoskeleton. It localises to the microtubule organizing center. Its subcellular location is the golgi apparatus membrane. The protein resides in the endoplasmic reticulum. The protein localises to the mitochondrion. It is found in the secreted. It localises to the nucleus. The enzyme catalyses ATP + H2O = ADP + phosphate + H(+). With respect to regulation, under resting conditions, NLRP3 binds ADP and is autoinhibited. Inactive NLRP3 forms homodecameric double-ring cages that hide pyrin domains within NACHT-LRR rings to avoid premature activation. NLRP3 activation stimuli include extracellular ATP, nigericin, reactive oxygen species, crystals of monosodium urate or cholesterol, amyloid-beta fibers, environmental or industrial particles and nanoparticles, such as asbestos, silica, aluminum salts, cytosolic dsRNA, etc. Almost all stimuli trigger intracellular K(+) efflux. These stimuli lead to membrane perturbations that induce activation of NLRP3. Upon activation, NLRP3 is transported to microtubule organizing center (MTOC), where it is unlocked by NEK7, leading to its relocalization to dispersed trans-Golgi network (dTGN) vesicle membranes and recruitment of PYCARD/ASC for the formation of an active inflammasome complex. NEK7-activated NLRP3 forms a disk-shaped inflammasome. NLRP3 and PYCARD/ASC interact via their respective pyrin domains; interaction initiates speck formation (nucleation) which greatly enhances further addition of soluble PYCARD/ASC molecules to the speck in a prion-like polymerization process. Clustered PYCARD/ASC nucleates the formation of CASP1 filaments through the interaction of their respective CARD domains, acting as a platform for CASP1 polymerization and activation. Active CASP1 then processes IL1B and IL18 precursors, leading to the release of mature cytokines in the extracellular milieu and inflammatory response. NLRP3 inflammasome assembly is inhibited by IRGM, which impedes NLRP3 oligomerization. NLRP3 inflammasome is inhibited by cyclic AMP (cAMP), which directly binds NLRP3; inhibition is relieved by calcium-sensing receptor CASR, which inhibits production of cAMP. Specifically inhibited by sulfonylurea MCC950 (also named CP-456,773, CRID3), a potent and specific small-molecule inhibitor of the NLRP3 inflammasome that acts by preventing ATP hydrolysis. Functionally, sensor component of the NLRP3 inflammasome, which mediates inflammasome activation in response to defects in membrane integrity, leading to secretion of inflammatory cytokines IL1B and IL18 and pyroptosis. In response to pathogens and other damage-associated signals that affect the integrity of membranes, initiates the formation of the inflammasome polymeric complex composed of NLRP3, CASP1 and PYCARD/ASC. Recruitment of pro-caspase-1 (proCASP1) to the NLRP3 inflammasome promotes caspase-1 (CASP1) activation, which subsequently cleaves and activates inflammatory cytokines IL1B and IL18 and gasdermin-D (GSDMD), promoting cytokine secretion and pyroptosis. Activation of NLRP3 inflammasome is also required for HMGB1 secretion; stimulating inflammatory responses. Under resting conditions, ADP-bound NLRP3 is autoinhibited. NLRP3 activation stimuli include extracellular ATP, nigericin, reactive oxygen species, crystals of monosodium urate or cholesterol, amyloid-beta fibers, environmental or industrial particles and nanoparticles, such as asbestos, silica, aluminum salts, cytosolic dsRNA, etc. Almost all stimuli trigger intracellular K(+) efflux. These stimuli lead to membrane perturbation and activation of NLRP3. Upon activation, NLRP3 is transported to microtubule organizing center (MTOC), where it is unlocked by NEK7, leading to its relocalization to dispersed trans-Golgi network (dTGN) vesicle membranes and formation of an active inflammasome complex. Associates with dTGN vesicle membranes by binding to phosphatidylinositol 4-phosphate (PtdIns4P). Shows ATPase activity. Independently of inflammasome activation, regulates the differentiation of T helper 2 (Th2) cells and has a role in Th2 cell-dependent asthma and tumor growth. During Th2 differentiation, required for optimal IRF4 binding to IL4 promoter and for IRF4-dependent IL4 transcription. Binds to the consensus DNA sequence 5'-GRRGGNRGAG-3'. May also participate in the transcription of IL5, IL13, GATA3, CCR3, CCR4 and MAF. The protein is NACHT, LRR and PYD domains-containing protein 3 of Rattus norvegicus (Rat).